A 209-amino-acid polypeptide reads, in one-letter code: Protein GrpE (209 aa).

It belongs to the GrpE family. As to quaternary structure, homodimer.

The protein resides in the cytoplasm. In terms of biological role, participates actively in the response to hyperosmotic and heat shock by preventing the aggregation of stress-denatured proteins, in association with DnaK and GrpE. It is the nucleotide exchange factor for DnaK and may function as a thermosensor. Unfolded proteins bind initially to DnaJ; upon interaction with the DnaJ-bound protein, DnaK hydrolyzes its bound ATP, resulting in the formation of a stable complex. GrpE releases ADP from DnaK; ATP binding to DnaK triggers the release of the substrate protein, thus completing the reaction cycle. Several rounds of ATP-dependent interactions between DnaJ, DnaK and GrpE are required for fully efficient folding. In Colwellia psychrerythraea (strain 34H / ATCC BAA-681) (Vibrio psychroerythus), this protein is Protein GrpE.